Here is a 377-residue protein sequence, read N- to C-terminus: Gastricsin (377 aa).

The N-terminal stretch at 1-5 is a signal peptide; the sequence is QLLEA. 2 propeptides (activation peptide) span residues 6–31 and 32–48; these read AVVKVPLKKFKSIRETMKEKGLLGEF and LRTHKYDPAWKYHFGDL. The region spanning 62-374 is the Peptidase A1 domain; it reads YFGEISIGTP…DLSNNRVGFA (313 aa). Asp-80 is an active-site residue. 2 disulfides stabilise this stretch: Cys-93–Cys-98 and Cys-256–Cys-260. Asp-265 is a catalytic residue. A disulfide bond links Cys-299 and Cys-332.

This sequence belongs to the peptidase A1 family. Each pepsinogen is converted to corresponding pepsin at pH 2.0 in part as a result of the release of a 47 AA activation segment and in part as a result of stepwise proteolytic cleavage via an intermediate form(s).

It is found in the secreted. It catalyses the reaction More restricted specificity than pepsin A, but shows preferential cleavage at Tyr-|-Xaa bonds. High activity on hemoglobin.. Functionally, hydrolyzes a variety of proteins. In Macaca fuscata fuscata (Japanese macaque), this protein is Gastricsin (PGC).